A 200-amino-acid chain; its full sequence is 3-isopropylmalate dehydratase small subunit (200 aa).

Belongs to the LeuD family. LeuD type 1 subfamily. As to quaternary structure, heterodimer of LeuC and LeuD.

It catalyses the reaction (2R,3S)-3-isopropylmalate = (2S)-2-isopropylmalate. Its pathway is amino-acid biosynthesis; L-leucine biosynthesis; L-leucine from 3-methyl-2-oxobutanoate: step 2/4. In terms of biological role, catalyzes the isomerization between 2-isopropylmalate and 3-isopropylmalate, via the formation of 2-isopropylmaleate. In Erythrobacter litoralis (strain HTCC2594), this protein is 3-isopropylmalate dehydratase small subunit.